The primary structure comprises 205 residues: Small ribosomal subunit protein uS4 (205 aa).

Residues 18 to 46 (NIWGRPKSPVNRREYGPGQHGQRRKGKLS) form a disordered region. The S4 RNA-binding domain occupies 94 to 154 (RRLDAVVYRA…EASKQLAHVL (61 aa)).

The protein belongs to the universal ribosomal protein uS4 family. As to quaternary structure, part of the 30S ribosomal subunit. Contacts protein S5. The interaction surface between S4 and S5 is involved in control of translational fidelity.

Functionally, one of the primary rRNA binding proteins, it binds directly to 16S rRNA where it nucleates assembly of the body of the 30S subunit. With S5 and S12 plays an important role in translational accuracy. In Bradyrhizobium diazoefficiens (strain JCM 10833 / BCRC 13528 / IAM 13628 / NBRC 14792 / USDA 110), this protein is Small ribosomal subunit protein uS4.